Consider the following 149-residue polypeptide: Calmodulin-1 (149 aa).

Residue Ala2 is modified to N-acetylalanine. 4 consecutive EF-hand domains span residues 8–43, 44–79, 81–116, and 117–149; these read EQIAEFKEAFSLFDKDGDGCITTKELGTVMRSLGQN, PTEAELQDMISEADADQNGTIDFPEFLNLMARKMKD, DSEEELKEAFKVFDKDQNGFISAAELRHVMTNLGEK, and LTDEEVDEMIREADIDGDGQVNYEEFVRMMLAK. Ca(2+) contacts are provided by Asp21, Asp23, Asp25, Cys27, Glu32, Asp57, Asp59, Asn61, Thr63, Glu68, Asp94, Asp96, Asn98, and Glu105. Lys116 carries the post-translational modification N6,N6,N6-trimethyllysine. Asp130, Asp132, Asp134, Gln136, and Glu141 together coordinate Ca(2+).

It belongs to the calmodulin family. As to expression, high expression in stolon tips and stems, moderate in roots, and very low in leaves. Localized in the meristematic regions of the shoot and root tips, the tip of the developing tuber and the vascular zones of petiole and tuber. Not detected in mesophyll cells.

Functionally, calmodulin mediates the control of a large number of enzymes, ion channels and other proteins by Ca(2+). Among the enzymes to be stimulated by the calmodulin-Ca(2+) complex are a number of protein kinases and phosphatases. In Solanum tuberosum (Potato), this protein is Calmodulin-1 (PCM1).